We begin with the raw amino-acid sequence, 202 residues long: Thymidylate kinase (202 aa).

13–20 (GTDGAGKS) contributes to the ATP binding site.

The protein belongs to the thymidylate kinase family.

It carries out the reaction dTMP + ATP = dTDP + ADP. Phosphorylation of dTMP to form dTDP in both de novo and salvage pathways of dTTP synthesis. The sequence is that of Thymidylate kinase from Desulfotalea psychrophila (strain LSv54 / DSM 12343).